The primary structure comprises 327 residues: MSRHWTIAVLGAGAWGTALALTMQRAGHGARLWARDQNLVREINNARSNSRYLPGVKIDPAVLATDDMAAALEGADCVLAAIPAQSLRSVLAVAGTALKAHIPVVLCAKGIERETGQLMSEAARQALPENPLAALSGPSFAADLARGLPTAVTVAAQDGALAADLAKKLSAPNLRCYSSDDLMGVELGGALKNVLAIAAGATSGAGLGASAVAAITTRGFVELRRIGAAFGARAETLMGLSGLGDLILTCNSPQSRNFAYGAALGRGERLDNLPLAEGVFTASIAARMVSERGLEAPIIETVNGMLNGGLTVHAAMQALLARPLKSE.

Trp15, Arg35, and Lys109 together coordinate NADPH. Lys109, Gly137, and Ser139 together coordinate sn-glycerol 3-phosphate. Ala141 lines the NADPH pocket. Sn-glycerol 3-phosphate contacts are provided by Lys192, Asp245, Ser255, Arg256, and Asn257. The Proton acceptor role is filled by Lys192. Arg256 lines the NADPH pocket. Leu275 and Glu277 together coordinate NADPH.

This sequence belongs to the NAD-dependent glycerol-3-phosphate dehydrogenase family.

Its subcellular location is the cytoplasm. The catalysed reaction is sn-glycerol 3-phosphate + NAD(+) = dihydroxyacetone phosphate + NADH + H(+). The enzyme catalyses sn-glycerol 3-phosphate + NADP(+) = dihydroxyacetone phosphate + NADPH + H(+). The protein operates within membrane lipid metabolism; glycerophospholipid metabolism. In terms of biological role, catalyzes the reduction of the glycolytic intermediate dihydroxyacetone phosphate (DHAP) to sn-glycerol 3-phosphate (G3P), the key precursor for phospholipid synthesis. In Chelativorans sp. (strain BNC1), this protein is Glycerol-3-phosphate dehydrogenase [NAD(P)+].